Reading from the N-terminus, the 130-residue chain is Small ribosomal subunit protein uS9 (130 aa).

The protein belongs to the universal ribosomal protein uS9 family.

This Cupriavidus taiwanensis (strain DSM 17343 / BCRC 17206 / CCUG 44338 / CIP 107171 / LMG 19424 / R1) (Ralstonia taiwanensis (strain LMG 19424)) protein is Small ribosomal subunit protein uS9.